A 1352-amino-acid polypeptide reads, in one-letter code: Astrotactin-2 (1352 aa).

Positions 1–31 are disordered; that stretch reads MAAAGARRSPGRGLGLRGRPRLGFHPGPPPP. An N-terminal signal peptide occupies residues 1-51; that stretch reads MAAAGARRSPGRGLGLRGRPRLGFHPGPPPPPPPPLLLLFLLLLPPPPLLA. Over 52-218 the chain is Lumenal; that stretch reads GATAAAASRE…IVEEQMHILH (167 aa). N-linked (GlcNAc...) asparagine glycosylation is present at Asn-180. The helical transmembrane segment at 219–239 threads the bilayer; sequence ISVMGGLIALLLLLLVFTVAL. Residues 240–447 lie on the Cytoplasmic side of the membrane; that stretch reads YAQRRWQKRR…KGLLKSPVNK (208 aa). 2 disordered regions span residues 308-327 and 375-421; these read EEEE…DEFG and TPVE…ADDE. Polar residues predominate over residues 383 to 392; that stretch reads QPASRSSTSA. The chain crosses the membrane as a helical span at residues 448 to 468; the sequence is TALTLIAVSSCILAMVCGNQM. Over 469-1352 the chain is Lumenal; the sequence is SCPLTVKVTL…RNTYGETKGR (884 aa). EGF-like domains follow at residues 523 to 563, 664 to 708, and 712 to 764; these read VRDL…HLCV, PVRD…SGCY, and KGID…KSCL. Cystine bridges form between Cys-527–Cys-539, Cys-535–Cys-546, Cys-548–Cys-562, Cys-668–Cys-681, Cys-675–Cys-692, Cys-694–Cys-707, Cys-716–Cys-728, Cys-724–Cys-748, and Cys-750–Cys-763. A glycan (N-linked (GlcNAc...) asparagine) is linked at Asn-796. 3 disulfide bridges follow: Cys-838-Cys-1000, Cys-929-Cys-990, and Cys-996-Cys-1003. N-linked (GlcNAc...) asparagine glycosylation is present at Asn-1033. 5 cysteine pairs are disulfide-bonded: Cys-1049–Cys-1060, Cys-1062–Cys-1075, Cys-1149–Cys-1171, Cys-1203–Cys-1290, and Cys-1311–Cys-1334. Residues 1079-1201 enclose the Fibronectin type-III domain; that stretch reads PQPVLRLSPT…SELSTVTLRT (123 aa).

This sequence belongs to the astrotactin family. As to quaternary structure, interacts with ASTN1; the interaction is not calcium-dependent. As to expression, detected in cerebellum granule neurons; not detected in astroglia (at protein level). Detected primarily in cerebellum, and at lower levels in brain cortex, olfactory bulb, hindbrain and hippocampus dentate gyrus. Between 6 and 10 days after birth, when granule cell migration occurs in the cerebellum, detected in granule cell precursors in the external germinal layer, the molecular layer, the internal granule layer and in Purkinje neurons. Detected in postmitotic neurons in adult cerebellum.

It localises to the membrane. The protein localises to the perikaryon. It is found in the cytoplasm. Its subcellular location is the cell cortex. The protein resides in the early endosome. It localises to the late endosome. The protein localises to the cytoplasmic vesicle. It is found in the clathrin-coated vesicle. Its function is as follows. Mediates recycling of the neuronal cell adhesion molecule ASTN1 to the anterior pole of the cell membrane in migrating neurons. Promotes ASTN1 internalization and intracellular transport of endocytosed ASTN1. Selectively binds inositol-4,5-bisphosphate, inositol-3,4,5-trisphosphate and inositol-1,3,4,5-tetrakisphosphate, suggesting it is recruited to membranes that contain lipids with a phosphoinositide headgroup. The protein is Astrotactin-2 (Astn2) of Mus musculus (Mouse).